Reading from the N-terminus, the 1086-residue chain is Ribonuclease 3 (1086 aa).

Disordered stretches follow at residues 1-77 (MSDE…DSPR) and 158-233 (CHSM…LRNF). The segment covering 13–23 (PKHKRARRKKY) has biased composition (basic residues). Positions 24 to 35 (QKEYQERHKEEM) are enriched in basic and acidic residues. Residues 43 to 53 (FQNQPSTSSAP) are compositionally biased toward polar residues. The segment covering 159-168 (HSMKGRKTPK) has biased composition (basic residues). The segment covering 181–190 (VSDDSNDSQD) has biased composition (acidic residues). Over residues 191-201 (EASTSEPTNRQ) the composition is skewed to polar residues. A compositionally biased stretch (basic and acidic residues) spans 203 to 217 (PEADKTGEVKDEKQT). 2 RNase III domains span residues 607–781 (LDVF…LDGG) and 833–957 (FHAL…VDRG). Mg(2+) contacts are provided by glutamate 694, asparagine 767, glutamate 770, glutamate 873, aspartate 943, and glutamate 946. The DRBM domain occupies 984–1059 (DAKSHLQQWC…AELALANLES (76 aa)).

Belongs to the ribonuclease III family. Mg(2+) serves as cofactor. Mn(2+) is required as a cofactor.

The protein localises to the nucleus. The catalysed reaction is Endonucleolytic cleavage to 5'-phosphomonoester.. Executes the initial step of microRNA (miRNA) processing in the nucleus, that is the cleavage of pri-miRNA to release pre-miRNA. Involved in pre-rRNA processing. Cleaves double-strand RNA and does not cleave single-strand RNA. Involved in fertility. Required for the function or synthesis of the let-7 miRNA. This Caenorhabditis elegans protein is Ribonuclease 3 (drsh-1).